Consider the following 841-residue polypeptide: DNA ligase (841 aa).

NAD(+)-binding positions include Asp54–Asp58, Ser103–Leu104, and Glu143. Lys145 functions as the N6-AMP-lysine intermediate in the catalytic mechanism. Arg166, Glu203, Lys321, and Lys345 together coordinate NAD(+). Zn(2+) is bound by residues Cys471, Cys474, Cys489, and Cys495. The interval Lys554–His575 is disordered. Positions Gln561–Gly570 are enriched in polar residues. Residues Gly764–Gly841 enclose the BRCT domain.

Belongs to the NAD-dependent DNA ligase family. LigA subfamily. It depends on Mg(2+) as a cofactor. The cofactor is Mn(2+).

The enzyme catalyses NAD(+) + (deoxyribonucleotide)n-3'-hydroxyl + 5'-phospho-(deoxyribonucleotide)m = (deoxyribonucleotide)n+m + AMP + beta-nicotinamide D-nucleotide.. In terms of biological role, DNA ligase that catalyzes the formation of phosphodiester linkages between 5'-phosphoryl and 3'-hydroxyl groups in double-stranded DNA using NAD as a coenzyme and as the energy source for the reaction. It is essential for DNA replication and repair of damaged DNA. In Neisseria meningitidis serogroup C / serotype 2a (strain ATCC 700532 / DSM 15464 / FAM18), this protein is DNA ligase.